The sequence spans 248 residues: Probable transcriptional regulatory protein FTL_0929 (248 aa).

Belongs to the TACO1 family.

It localises to the cytoplasm. The polypeptide is Probable transcriptional regulatory protein FTL_0929 (Francisella tularensis subsp. holarctica (strain LVS)).